Here is an 838-residue protein sequence, read N- to C-terminus: Probable beta-glucosidase I (838 aa).

The N-linked (GlcNAc...) asparagine glycan is linked to Asn-197. Residue Asp-225 is part of the active site. Positions 395 to 555 (DGKKGFKFRV…SQEELISKAA (161 aa)) constitute a PA14 domain. The N-linked (GlcNAc...) asparagine glycan is linked to Asn-493.

The protein belongs to the glycosyl hydrolase 3 family.

It is found in the secreted. The enzyme catalyses Hydrolysis of terminal, non-reducing beta-D-glucosyl residues with release of beta-D-glucose.. The protein operates within glycan metabolism; cellulose degradation. Beta-glucosidases are one of a number of cellulolytic enzymes involved in the degradation of cellulosic biomass. Catalyzes the last step releasing glucose from the inhibitory cellobiose. The chain is Probable beta-glucosidase I (bglI) from Aspergillus fumigatus (strain ATCC MYA-4609 / CBS 101355 / FGSC A1100 / Af293) (Neosartorya fumigata).